The primary structure comprises 426 residues: Cell adhesion molecule CEACAM16 (426 aa).

The first 22 residues, 1–22 (MKMPLTWYSWFLLSAWILNTGA), serve as a signal peptide directing secretion. Asn-38 carries an N-linked (GlcNAc...) asparagine glycan. The segment at 77–96 (ETPGPAHTGREAVRPDGSLD) is disordered. Basic and acidic residues predominate over residues 84 to 95 (TGREAVRPDGSL). Ig-like C2-type domains follow at residues 134–219 (PPTV…LNLT) and 224–310 (PERV…ASVV). Cys-155 and Cys-202 are disulfide-bonded. Residue Asn-217 is glycosylated (N-linked (GlcNAc...) asparagine). Cys-253 and Cys-294 form a disulfide bridge.

It belongs to the immunoglobulin superfamily. CEA family. In terms of assembly, homooligomer; can for homodimers and homotetramers. Interacts with TECTA and TECTB. As to expression, expressed in cochlear outer hair cells (OHC).

The protein localises to the secreted. Functionally, required for proper hearing, plays a role in maintaining the integrity of the tectorial membrane. The chain is Cell adhesion molecule CEACAM16 from Mus musculus (Mouse).